The chain runs to 145 residues: D-aminoacyl-tRNA deacylase (145 aa).

The short motif at Gly137–Pro138 is the Gly-cisPro motif, important for rejection of L-amino acids element.

The protein belongs to the DTD family. In terms of assembly, homodimer.

Its subcellular location is the cytoplasm. It carries out the reaction glycyl-tRNA(Ala) + H2O = tRNA(Ala) + glycine + H(+). The catalysed reaction is a D-aminoacyl-tRNA + H2O = a tRNA + a D-alpha-amino acid + H(+). Its function is as follows. An aminoacyl-tRNA editing enzyme that deacylates mischarged D-aminoacyl-tRNAs. Also deacylates mischarged glycyl-tRNA(Ala), protecting cells against glycine mischarging by AlaRS. Acts via tRNA-based rather than protein-based catalysis; rejects L-amino acids rather than detecting D-amino acids in the active site. By recycling D-aminoacyl-tRNA to D-amino acids and free tRNA molecules, this enzyme counteracts the toxicity associated with the formation of D-aminoacyl-tRNA entities in vivo and helps enforce protein L-homochirality. In Chromohalobacter salexigens (strain ATCC BAA-138 / DSM 3043 / CIP 106854 / NCIMB 13768 / 1H11), this protein is D-aminoacyl-tRNA deacylase.